Here is a 178-residue protein sequence, read N- to C-terminus: MSRIGRLPIDVPAGVDVKIDGQAVTVKGPKGELSLTVASPIEVKLEEGQVLVTRPDDERESRSLHGLTRTLLNNNIVGVTQGYSKGLEIVGTGYRVAQKGAGVEFALGFSHPVTVEPPAGITFTVEGNNKLTVAGIDKQAVGEVAANIRKIRKPEPYKGKGVRYAGEVVRRKAGKAGK.

The protein belongs to the universal ribosomal protein uL6 family. As to quaternary structure, part of the 50S ribosomal subunit.

In terms of biological role, this protein binds to the 23S rRNA, and is important in its secondary structure. It is located near the subunit interface in the base of the L7/L12 stalk, and near the tRNA binding site of the peptidyltransferase center. The polypeptide is Large ribosomal subunit protein uL6 (Leifsonia xyli subsp. xyli (strain CTCB07)).